The sequence spans 117 residues: Large ribosomal subunit protein bL20 (117 aa).

It belongs to the bacterial ribosomal protein bL20 family.

Its function is as follows. Binds directly to 23S ribosomal RNA and is necessary for the in vitro assembly process of the 50S ribosomal subunit. It is not involved in the protein synthesizing functions of that subunit. This chain is Large ribosomal subunit protein bL20, found in Vibrio atlanticus (strain LGP32) (Vibrio splendidus (strain Mel32)).